The primary structure comprises 98 residues: Small ribosomal subunit protein eS24 (98 aa).

The protein belongs to the eukaryotic ribosomal protein eS24 family.

This is Small ribosomal subunit protein eS24 from Thermococcus gammatolerans (strain DSM 15229 / JCM 11827 / EJ3).